The primary structure comprises 132 residues: Agouti-related protein (132 aa).

Residues 1 to 20 form the signal peptide; sequence MLTAAVLSCALLLALPATRG. A propeptide spanning residues 21–82 is cleaved from the precursor; that stretch reads AQMGLAPMEG…VLDLQDREPR (62 aa). 5 cysteine pairs are disulfide-bonded: Cys87/Cys102, Cys94/Cys108, Cys101/Cys119, Cys105/Cys129, and Cys110/Cys117. Residues 87-129 form the Agouti domain; that stretch reads CVRLHESCLGQQVPCCDPCATCYCRFFNAFCYCRKLGTAMNPC. Residues 111-113 are interaction with melanocortin receptors; it reads RFF.

As to quaternary structure, interacts with melanocortin receptors MC3R, MC4R and MC5R. As to expression, expressed primarily in the adrenal gland, subthalamic nucleus, and hypothalamus, with a lower level of expression occurring in testis, lung, and kidney.

The protein localises to the secreted. Its subcellular location is the golgi apparatus lumen. Functionally, plays a role in weight homeostasis. Involved in the control of feeding behavior through the central melanocortin system. Acts as alpha melanocyte-stimulating hormone antagonist by inhibiting cAMP production mediated by stimulation of melanocortin receptors within the hypothalamus and adrenal gland. Has very low activity with MC5R. Is an inverse agonist for MC3R and MC4R being able to suppress their constitutive activity. It promotes MC3R and MC4R endocytosis in an arrestin-dependent manner. This Homo sapiens (Human) protein is Agouti-related protein (AGRP).